The primary structure comprises 172 residues: Female-specific lacrimal gland protein (172 aa).

The first 16 residues, 1–16 (MVKFLLLALALGVSCA), serve as a signal peptide directing secretion. Intrachain disulfides connect cysteine 60–cysteine 64 and cysteine 79–cysteine 170.

It belongs to the calycin superfamily. Lipocalin family. Expressed in the lacrimal gland from where it is secreted into tears (at protein level).

It localises to the secreted. In Mesocricetus auratus (Golden hamster), this protein is Female-specific lacrimal gland protein.